We begin with the raw amino-acid sequence, 101 residues long: Large ribosomal subunit protein uL6m (101 aa).

The protein belongs to the universal ribosomal protein uL6 family.

It is found in the mitochondrion. This chain is Large ribosomal subunit protein uL6m (RPL6), found in Marchantia polymorpha (Common liverwort).